The sequence spans 237 residues: Riboflavin kinase (237 aa).

The unknown stretch occupies residues 1–101 (MRLKIKAIWV…SRIFSSEPDV (101 aa)). A riboflavin kinase region spans residues 102 to 237 (LELEGNVLKG…VKKQGMEGQK (136 aa)). A CDP-binding site is contributed by 111-116 (GLGEGQ). Residues T140 and N142 each coordinate Mg(2+). The FMN site is built by T197 and E205. A CDP-binding site is contributed by 210 to 213 (VKLR).

The protein belongs to the archaeal riboflavin kinase family. The cofactor is Mg(2+).

The catalysed reaction is riboflavin + CTP = CDP + FMN + H(+). It functions in the pathway cofactor biosynthesis; FMN biosynthesis; FMN from riboflavin (CTP route): step 1/1. Functionally, catalyzes the CTP-dependent phosphorylation of riboflavin (vitamin B2) to form flavin mononucleotide (FMN). The protein is Riboflavin kinase (ribK) of Methanosarcina acetivorans (strain ATCC 35395 / DSM 2834 / JCM 12185 / C2A).